Here is a 1342-residue protein sequence, read N- to C-terminus: ATP-dependent RNA helicase TDRD9 (1342 aa).

The segment covering 31-63 has biased composition (basic and acidic residues); sequence KAEAEDNATEVRSDKAFSELSSPEKEKSDDGNQ. The tract at residues 31 to 81 is disordered; that stretch reads KAEAEDNATEVRSDKAFSELSSPEKEKSDDGNQRRKRAQLPTGPGTSPPSL. The 167-residue stretch at 99 to 265 folds into the Helicase ATP-binding domain; sequence VSLIENNSVV…FGSPIRNQMN (167 aa). 112 to 119 contacts ATP; that stretch reads GATGSGKT. A DEAH box motif is present at residues 211-214; that stretch reads DEVH. Residues 317–503 enclose the Helicase C-terminal domain; the sequence is SLIQSFDEME…LLKVKLLDMG (187 aa). The Tudor domain maps to 901 to 962; it reads SLYPNLLCVA…RELPSDLMTP (62 aa).

It belongs to the DEAD box helicase family. DEAH subfamily.

The protein resides in the cytoplasm. It is found in the nucleus. It carries out the reaction ATP + H2O = ADP + phosphate + H(+). Functionally, ATP-binding RNA helicase which plays a central role during spermatogenesis by repressing transposable elements and preventing their mobilization, which is essential for the germline integrity. Acts via the piRNA metabolic process, which mediates the repression of transposable elements during meiosis by forming complexes composed of piRNAs and Piwi proteins and governs the methylation and subsequent repression of transposons. Acts downstream of piRNA biogenesis: exclusively required for transposon silencing in the nucleus, suggesting that it acts as a nuclear effector in the nucleus together with piwil4. This is ATP-dependent RNA helicase TDRD9 from Danio rerio (Zebrafish).